The sequence spans 516 residues: Cytochrome P450 monooxygenase lcsI (516 aa).

A helical transmembrane segment spans residues 20–42 (ICVAAGCAFALSLLYLYVRALYL). N-linked (GlcNAc...) asparagine glycans are attached at residues N131, N184, N415, N420, and N442. C456 is a binding site for heme.

Belongs to the cytochrome P450 family. Requires heme as cofactor.

It is found in the membrane. The protein operates within secondary metabolite biosynthesis. In terms of biological role, cytochrome P450 monooxygenase; part of the gene cluster that mediates the biosynthesis of the lipopeptide antibiotics leucinostatins that show extensive biological activities, including antimalarial, antiviral, antibacterial, antifungal, and antitumor activities, as well as phytotoxic. Leucinostatin A contains nine amino acid residues, including the unusual amino acid 4-methyl-L-proline (MePro), 2-amino-6-hydroxy-4-methyl-8-oxodecanoic acid (AHyMeOA), 3-hydroxyleucine (HyLeu), alpha-aminoisobutyric acid (AIB), beta-Ala, a 4-methylhex-2-enoic acid at the N-terminus as well as a N1,N1-dimethylpropane-1,2-diamine (DPD) at the C-terminus. The biosynthesis of leucinostatins is probably initiated with the assembly of 4-methylhex-2-enoic acid by a reducing PKS. Two reducing polyketide synthases, lcsB and lcsC, have been identified in the cluster and it is not clear which is the one that assembles 4-methylhex-2-enoic acid since both contain KS, AT, DH, cMT, ER, KR and ACP domains. The polyketide residue might be transferred to the NRPS lcsA, mediated by two additional enzymes, the acyl-CoA ligase lcsD and the thioesterase lcsE. The linear polyketide carboxylic acid, which is released from PKS, is converted to a CoA thioester by lcsD, and then lcsE hydrolyzes the thiol bond and shuttles the polyketide intermediate to lcsA. The C domain of the first module catalyzed the condensation of 4-methylhex-2-enoic acid and MePro carried by domain A1, followed by successive condensations of nine amino acids to trigger the elongation of the linear peptide. A5 and A6 domains of lcsA are proposed to incorporate leucine, A2 AHyMeOA, and A3 incorporates HyLeu. A4, A7 and A8 incorporate AIB. The AHyMeOA in leucinostatin A activated by the A2 might be produced by the second PKS (lcsB or lcsC) present within the cluster. The MePro is probably produced via leucine cyclization and may originate from a separate pathway, independent of the cluster. Another nonproteinogenic amino acid, beta-Ala, could be produced by an aspartic acid decarboxylase also localized outside of the cluster. Two candidates are VFPBJ_01400 and VFPBJ_10476. The final peptide scaffold may be released by the NAD(P)H-dependent thioester reductase (TE) at the C-terminal region of lcsA. Transamination of the lcsA product by the transaminase lcsP may produce DPD at the C-terminus. Further hydroxylation steps performed alternatively by the cytochrome P450 monooxygenases lcsI, lcsK and lcsN then yield the non-methylated leucinostatins precursor. It is also possible that leucines can be hydroxylated prior to their incorporation into the peptide. Varying extents of methylation then lead to the formation of leucinostatins A and B. The polypeptide is Cytochrome P450 monooxygenase lcsI (Purpureocillium lilacinum (Paecilomyces lilacinus)).